A 317-amino-acid polypeptide reads, in one-letter code: Cytochrome c biogenesis protein CcsA (317 aa).

7 helical membrane-spanning segments follow: residues 13 to 35 (ISFSIIAIVITTHLMTLLVHEIV), 44 to 64 (GMIATFFCITGLLVTRWIYSG), 71 to 91 (LYESLMFLSWSFSLILMVPYF), 143 to 163 (MLLSYAALLCGSLLSIALLVI), 171 to 191 (MIGFTNHLLIWPFSFGEIKYL), 225 to 245 (VIGLGFTFSTIGILSGAVWAN), and 286 to 306 (AIVASMGFLIIWICYFGVNLL).

This sequence belongs to the CcmF/CycK/Ccl1/NrfE/CcsA family. May interact with Ccs1.

The protein localises to the plastid. It localises to the chloroplast thylakoid membrane. Functionally, required during biogenesis of c-type cytochromes (cytochrome c6 and cytochrome f) at the step of heme attachment. The protein is Cytochrome c biogenesis protein CcsA of Illicium oligandrum (Star anise).